The chain runs to 87 residues: Putative protein KleG (87 aa).

Disordered stretches follow at residues 1–23 and 61–87; these read MRHSSLTPRGKSWPCSAPPWPSS and IPTTGDRRGRRPQRHRPSTRREQIFSR. A compositionally biased stretch (basic residues) spans 68 to 78; it reads RGRRPQRHRPS.

The protein is Putative protein KleG (kleG) of Escherichia coli.